A 334-amino-acid polypeptide reads, in one-letter code: Sucrose operon repressor (334 aa).

The HTH lacI-type domain occupies 6-63; that stretch reads VTIKDIAELAGVSKATASLVLNGRGKELRVAQETRERVLAIAREQHYQPSIHARSLRD. Positions 8-27 form a DNA-binding region, H-T-H motif; sequence IKDIAELAGVSKATASLVLN.

Repressor for the scr operon. Binds D-fructose as an inducer. This chain is Sucrose operon repressor (scrR), found in Klebsiella pneumoniae.